The following is a 187-amino-acid chain: UPF0301 protein VS_2679 (187 aa).

The protein belongs to the UPF0301 (AlgH) family.

In Vibrio atlanticus (strain LGP32) (Vibrio splendidus (strain Mel32)), this protein is UPF0301 protein VS_2679.